Consider the following 235-residue polypeptide: TIR domain-containing adapter molecule 2 (235 aa).

Positions 1–39 are disordered; sequence MGIGKSKINSCPLSLSWGKRHSVDTSPGYHESDSKKSED. Residue glycine 2 is the site of N-myristoyl glycine attachment. Serine 16 carries the post-translational modification Phosphoserine; by PKC/PRKCE. Over residues 30–39 the composition is skewed to basic and acidic residues; sequence HESDSKKSED. The region spanning 73 to 229 is the TIR domain; sequence AEEEVFLKFV…TIWKETRNMV (157 aa). Tyrosine 167 is modified (phosphotyrosine).

As to quaternary structure, homodimer. Interacts with TLR4, TICAM1, IRF3 and IRF7 in response to LPS. Interacts with IL1R1, IL1RAP, IRAK2, IRAK3 and TRAF6. Interacts with protein kinase-inactive mutants of IRAK1 and IRAK4. Isoform 1 interacts with isoform 2; the interaction occurs in late endosomes and disrupts the interaction between isoform 1 and TICAM1. Interacts with MYD88; the interaction decreases after IL-18 stimulation in a time-dependent manner. Interacts with IL18R1 and IL18RAP. Interacts with TLR2. Interacts with RAB11FIP2. Phosphorylated by PRKCE in response to LPS. Phosphorylation is essential for its function. It is depleted from the membrane upon phosphorylation. Tyrosine phosphorylation is inhibited by phosphatase PTPN4. In terms of processing, isoform 1 is myristoylated. Required for membrane association which is critical for its ability to initiate efficient signaling. Expressed in spleen, prostate, testis, uterus, small intestine, colon, peripheral blood leukocytes, heart, placenta, lung, liver, skeletal muscle, and pancreas Isoform 2 is ubiquitously expressed (at lower levels than isoform 1).

Its subcellular location is the cytoplasm. The protein resides in the golgi apparatus. The protein localises to the cell membrane. It localises to the endoplasmic reticulum. It is found in the early endosome membrane. Its subcellular location is the late endosome membrane. The protein resides in the cell projection. The protein localises to the phagocytic cup. In terms of biological role, functions as a sorting adapter in different signaling pathways to facilitate downstream signaling leading to type I interferon induction. In TLR4 signaling, physically bridges TLR4 and TICAM1 and functionally transmits signal to TICAM1 in early endosomes after endocytosis of TLR4. In TLR2 signaling, physically bridges TLR2 and MYD88 and is required for the TLR2-dependent movement of MYD88 to endosomes following ligand engagement. Involved in IL-18 signaling and is proposed to function as a sorting adapter for MYD88 in IL-18 signaling during adaptive immune response. Forms a complex with RAB11FIP2 that is recruited to the phagosomes to promote the activation of the actin-regulatory GTPases RAC1 and CDC42 and subsequent phagocytosis of Gram-negative bacteria. Its function is as follows. Proposed to inhibit LPS-TLR4 signaling at the late endosome by interaction with isoform 1 thereby disrupting the association of isoform 1 with TICAM1. May be involved in TLR4 degradation in late endosomes. In Homo sapiens (Human), this protein is TIR domain-containing adapter molecule 2 (TICAM2).